The primary structure comprises 354 residues: Malate dehydrogenase 1, peroxisomal (354 aa).

The tract at residues 6–14 (RIARISAHL) is peroxisomal targeting signal PTS2. Residues 49–55 (GAAGGIG) and Asp-75 each bind NAD(+). Substrate-binding residues include Arg-122 and Arg-128. NAD(+)-binding positions include Asn-135 and 158 to 160 (ISN). Asn-160 and Arg-194 together coordinate substrate. The Proton acceptor role is filled by His-218. Met-269 lines the NAD(+) pocket.

The protein belongs to the LDH/MDH superfamily. MDH type 1 family. As to quaternary structure, homodimer. In terms of tissue distribution, expressed in rosette leaves at low levels.

Its subcellular location is the peroxisome. It carries out the reaction (S)-malate + NAD(+) = oxaloacetate + NADH + H(+). Functionally, catalyzes a reversible NAD-dependent dehydrogenase reaction involved in central metabolism and redox homeostasis between organelle compartments. Peroxisomal NAD-dependent malate dehydrogenase involved in fatty acid beta-oxidation. Reoxidizes NADH from the beta-oxidation and provides NAD for the conversion of fatty acyl-CoA to acetyl-CoA. Does not participate directly in the glyoxylate cycle. Required for maintenance of photosynthetic rates under photorespiratory conditions, and carbon flow during photorespiration. Supplies NADH reductant to the peroxisomal hydroxypyruvate reductase (HPR), which reduces hydroxypyruvate into glycerate in the photorespiratory cycle. The sequence is that of Malate dehydrogenase 1, peroxisomal from Arabidopsis thaliana (Mouse-ear cress).